A 138-amino-acid chain; its full sequence is Small ribosomal subunit protein uS11c (138 aa).

The disordered stretch occupies residues 1-23; that stretch reads MAKPILRIGSRKNTRSGSRKNVR. A compositionally biased stretch (basic residues) spans 9 to 23; the sequence is GSRKNTRSGSRKNVR.

The protein belongs to the universal ribosomal protein uS11 family. As to quaternary structure, part of the 30S ribosomal subunit.

The protein localises to the plastid. The protein resides in the chloroplast. The chain is Small ribosomal subunit protein uS11c from Aethionema grandiflorum (Persian stone-cress).